Reading from the N-terminus, the 300-residue chain is tRNA dimethylallyltransferase (300 aa).

9-16 (GPTASGKS) provides a ligand contact to ATP. 11-16 (TASGKS) is a substrate binding site. An interaction with substrate tRNA region spans residues 34–37 (DSKQ).

It belongs to the IPP transferase family. In terms of assembly, monomer. Mg(2+) is required as a cofactor.

The enzyme catalyses adenosine(37) in tRNA + dimethylallyl diphosphate = N(6)-dimethylallyladenosine(37) in tRNA + diphosphate. Its function is as follows. Catalyzes the transfer of a dimethylallyl group onto the adenine at position 37 in tRNAs that read codons beginning with uridine, leading to the formation of N6-(dimethylallyl)adenosine (i(6)A). This Ehrlichia canis (strain Jake) protein is tRNA dimethylallyltransferase.